The following is a 439-amino-acid chain: Lipid-A-disaccharide synthase (439 aa).

The protein belongs to the LpxB family.

It catalyses the reaction a lipid X + a UDP-2-N,3-O-bis[(3R)-3-hydroxyacyl]-alpha-D-glucosamine = a lipid A disaccharide + UDP + H(+). The protein operates within bacterial outer membrane biogenesis; LPS lipid A biosynthesis. Condensation of UDP-2,3-diacylglucosamine and 2,3-diacylglucosamine-1-phosphate to form lipid A disaccharide, a precursor of lipid A, a phosphorylated glycolipid that anchors the lipopolysaccharide to the outer membrane of the cell. This is Lipid-A-disaccharide synthase from Xanthomonas axonopodis pv. citri (strain 306).